Consider the following 205-residue polypeptide: Probable inactive peroxygenase-like protein (205 aa).

Positions 79-88 (PVQLFGYILP) match the Proline-knot motif. S183 is modified (phosphoserine).

It belongs to the caleosin family.

The protein resides in the lipid droplet. The chain is Probable inactive peroxygenase-like protein from Arabidopsis thaliana (Mouse-ear cress).